A 476-amino-acid chain; its full sequence is MKKQNLNSILLMYINYIINYFNNIHKNQLKKDWIMEYEYMYKFLMNNMTCFIKWDNNKILLLLDMYYNVLYNYHKQRTPMSNKRLMNSKNIMDYKLLYTYFYILNKMKMEMDNYNNNNNNISLKYNELLKNIMNNLNYKTSNIETNLSNNFYLMDKYLINKYMKYLDMLNMIPNNYMFNNINYKGKLNIKTVLDLNNNEFYDYLSGLIEGDGYIGPGGITITNHANDVLNTIFINKRIKNSILVEKWMDTLKDNPYFVNAFSINIKTNLAKEKIFTNIYNKLYSDYKINQINNHIPYYNYLKINNKLPIKNIMDIKNNYWLAGFTAADGSFLSSMYNPKDTLLFKNMRPSYVISQVETRKELIYLIQESFDLSISNVKKVGNRKLKDFKLFTRTTDELMKFIYYFDKFLPLHDNKQFNYIKFRFNTFIKSYNWNNRVFGLVLSEYINNIKIDNYDYYYYNKYINMHNARKPKGYIK.

This sequence belongs to the LAGLIDADG endonuclease family. In terms of assembly, endonuclease SceI (Endo.SceI) is a heterodimer of ENS2 and SSC1. Post-translationally, the N-terminus is blocked.

The protein resides in the mitochondrion. Functionally, catalytic component of endonuclease SceI (Endo.SceI), which cleaves specifically at multiple sites on mitochondrial DNA and produces double-stranded breaks. This chain is Endonuclease SceI small subunit (ENS2), found in Saccharomyces cerevisiae (Baker's yeast).